Consider the following 526-residue polypeptide: ATP synthase subunit alpha (526 aa).

Residue 171–178 (GDRQTGKT) participates in ATP binding.

The protein belongs to the ATPase alpha/beta chains family. F-type ATPases have 2 components, CF(1) - the catalytic core - and CF(0) - the membrane proton channel. CF(1) has five subunits: alpha(3), beta(3), gamma(1), delta(1), epsilon(1). CF(0) has three main subunits: a(1), b(2) and c(9-12). The alpha and beta chains form an alternating ring which encloses part of the gamma chain. CF(1) is attached to CF(0) by a central stalk formed by the gamma and epsilon chains, while a peripheral stalk is formed by the delta and b chains.

The protein localises to the cell membrane. It carries out the reaction ATP + H2O + 4 H(+)(in) = ADP + phosphate + 5 H(+)(out). In terms of biological role, produces ATP from ADP in the presence of a proton gradient across the membrane. The alpha chain is a regulatory subunit. This chain is ATP synthase subunit alpha, found in Christiangramia forsetii (strain DSM 17595 / CGMCC 1.15422 / KT0803) (Gramella forsetii).